A 255-amino-acid polypeptide reads, in one-letter code: Complement C1q-like protein 3 (255 aa).

The first 20 residues, 1–20, serve as a signal peptide directing secretion; that stretch reads MVLLLVILIPVLVSSAGTSA. Positions 39-109 are disordered; sequence KAPSTAATPD…GLPGPPGAPG (71 aa). The Collagen-like domain occupies 61–111; sequence GPKGEAGRPGKAGPRGPPGEPGPPGPMGPPGEKGEPGRQGLPGPPGAPGLN. Residues 75 to 89 show a composition bias toward pro residues; it reads RGPPGEPGPPGPMGP. The region spanning 122–255 is the C1q domain; that stretch reads STVPKIAFYA…TFSGFIIYAD (134 aa).

Forms homooligomers. Interacts with ADGRB3. Interacts with C1QL2 and C1QL4, when proteins are coexpressed; this interaction does not occur after secretion. As to expression, highly expressed in adipose tissue, with expression levels at least 2 orders of magnitude higher than in other tissues, including brain and kidney.

Its subcellular location is the secreted. Its function is as follows. May regulate the number of excitatory synapses that are formed on hippocampus neurons. Has no effect on inhibitory synapses. Plays a role in glucose homeostasis. Via AMPK signaling pathway, stimulates glucose uptake in adipocytes, myotubes and hepatocytes and enhances insulin-stimulated glucose uptake. In a hepatoma cell line, reduces the expression of gluconeogenic enzymes G6PC1 and PCK1 and hence decreases de novo glucose production. This chain is Complement C1q-like protein 3 (C1QL3), found in Homo sapiens (Human).